The chain runs to 498 residues: Heat stress transcription factor A-3 (498 aa).

A disordered region spans residues 156-180 (RRRSSPTQQSGLQPGSSGESGLDPE). The span at 160–174 (SPTQQSGLQPGSSGE) shows a compositional bias: polar residues. Residues 180 to 235 (ELNTLRREKSALLQEVTRLKQEHLQTIEQMSTLNQRLESAEDRQKQMVSFLAKLLQ) are a coiled coil. A hydrophobic repeat HR-A/B region spans residues 184 to 234 (LRREKSALLQEVTRLKQEHLQTIEQMSTLNQRLESAEDRQKQMVSFLAKLL). A Nuclear localization signal motif is present at residues 258 to 263 (KRKFLK). A disordered region spans residues 263-291 (KHVPHGNIDSGESSSQHTGESNLDFSPTS). The span at 272-291 (SGESSSQHTGESNLDFSPTS) shows a compositional bias: polar residues. The short motif at 309 to 316 (LEDGDLNL) is the Nuclear export signal element. The tract at residues 356–382 (LEIPPASGPRGQDPTIGRSKGKNVLSP) is disordered.

It belongs to the HSF family. Class A subfamily. As to quaternary structure, homotrimer. Post-translationally, exhibits temperature-dependent phosphorylation.

The protein localises to the cytoplasm. Its subcellular location is the nucleus. In terms of biological role, transcriptional regulator that specifically binds DNA of heat shock promoter elements (HSE). The chain is Heat stress transcription factor A-3 (HSFA3) from Oryza sativa subsp. japonica (Rice).